The primary structure comprises 61 residues: Small ribosomal subunit protein uS14 (61 aa).

Zn(2+) contacts are provided by C24, C27, C40, and C43.

The protein belongs to the universal ribosomal protein uS14 family. Zinc-binding uS14 subfamily. In terms of assembly, part of the 30S ribosomal subunit. Contacts proteins S3 and S10. It depends on Zn(2+) as a cofactor.

Its function is as follows. Binds 16S rRNA, required for the assembly of 30S particles and may also be responsible for determining the conformation of the 16S rRNA at the A site. This chain is Small ribosomal subunit protein uS14, found in Bifidobacterium longum (strain DJO10A).